Reading from the N-terminus, the 66-residue chain is Large ribosomal subunit protein uL29 (66 aa).

Belongs to the universal ribosomal protein uL29 family.

This chain is Large ribosomal subunit protein uL29 (rpmC), found in Helicobacter pylori (strain J99 / ATCC 700824) (Campylobacter pylori J99).